The primary structure comprises 158 residues: Oocyte-secreted protein 2 (158 aa).

An N-terminal signal peptide occupies residues Met-1–Ala-17.

Belongs to the PLAC1 family. Highly expressed in oocytes.

It localises to the secreted. The protein localises to the cytoplasm. Functionally, involved in oocyte maturation. This is Oocyte-secreted protein 2 (OOSP2) from Homo sapiens (Human).